Reading from the N-terminus, the 236-residue chain is 1-(5-phosphoribosyl)-5-[(5-phosphoribosylamino)methylideneamino] imidazole-4-carboxamide isomerase (236 aa).

Asp-8 functions as the Proton acceptor in the catalytic mechanism. Asp-129 serves as the catalytic Proton donor.

This sequence belongs to the HisA/HisF family.

It is found in the cytoplasm. It carries out the reaction 1-(5-phospho-beta-D-ribosyl)-5-[(5-phospho-beta-D-ribosylamino)methylideneamino]imidazole-4-carboxamide = 5-[(5-phospho-1-deoxy-D-ribulos-1-ylimino)methylamino]-1-(5-phospho-beta-D-ribosyl)imidazole-4-carboxamide. Its pathway is amino-acid biosynthesis; L-histidine biosynthesis; L-histidine from 5-phospho-alpha-D-ribose 1-diphosphate: step 4/9. The protein is 1-(5-phosphoribosyl)-5-[(5-phosphoribosylamino)methylideneamino] imidazole-4-carboxamide isomerase of Ruminiclostridium cellulolyticum (strain ATCC 35319 / DSM 5812 / JCM 6584 / H10) (Clostridium cellulolyticum).